Reading from the N-terminus, the 283-residue chain is (+)-O-methylkolavelool synthase (283 aa).

S-adenosyl-L-methionine is bound by residues Gln106, Asn129–Ala130, and His151.

Belongs to the methyltransferase superfamily.

It catalyses the reaction (+)-kolavelool + S-adenosyl-L-methionine = (+)-O-methylkolavelool + S-adenosyl-L-homocysteine + H(+). In terms of biological role, involved in the biosynthesis of the diterpene (+)-O-methylkolavelool. Catalyzes the transfer of a methyl group from S-adenosyl-L-methionine to the hydroxy group of (+)-kolavelool, forming (+)-O-methylkolavelool. This chain is (+)-O-methylkolavelool synthase, found in Herpetosiphon aurantiacus (strain ATCC 23779 / DSM 785 / 114-95).